Reading from the N-terminus, the 98-residue chain is N(2)-fixation sustaining protein CowN (98 aa).

The protein belongs to the CowN family.

In terms of biological role, is required to sustain N(2)-dependent growth in the presence of low levels of carbon monoxide (CO). Probably acts by protecting the N(2) fixation ability of the nitrogenase complex, which is inactivated in the presence of CO. This chain is N(2)-fixation sustaining protein CowN, found in Azospirillum sp. (strain B510).